We begin with the raw amino-acid sequence, 121 residues long: Cysteine-rich neurotrophic factor (121 aa).

An N-terminal signal peptide occupies residues Met-1–Ala-18. Asn-57 is a glycosylation site (N-linked (GlcNAc...) asparagine).

It is found in the secreted. In terms of biological role, interacts with the p75 low-affinity neurotrophin receptor. Evokes neurite outgrowth and modulated calcium currents in pedal motor neurons. May be involved in target-derived trophic support for motor neurons. The polypeptide is Cysteine-rich neurotrophic factor (Lymnaea stagnalis (Great pond snail)).